We begin with the raw amino-acid sequence, 494 residues long: Ketol-acid reductoisomerase (NADP(+)) (494 aa).

The 195-residue stretch at 14 to 208 (LDQIGRCRFM…GGDRAGVLES (195 aa)) folds into the KARI N-terminal Rossmann domain. NADP(+) contacts are provided by residues 45–48 (CGAQ), Arg-68, Arg-76, Ser-78, and 108–110 (DKQ). Residue His-132 is part of the active site. NADP(+) is bound at residue Gly-158. KARI C-terminal knotted domains lie at 209 to 344 (SFVA…NAPE) and 345 to 487 (YNGK…MTDM). Residues Asp-217, Glu-221, Glu-389, and Glu-393 each coordinate Mg(2+). Residue Ser-414 participates in substrate binding.

This sequence belongs to the ketol-acid reductoisomerase family. The cofactor is Mg(2+).

The enzyme catalyses (2R)-2,3-dihydroxy-3-methylbutanoate + NADP(+) = (2S)-2-acetolactate + NADPH + H(+). The catalysed reaction is (2R,3R)-2,3-dihydroxy-3-methylpentanoate + NADP(+) = (S)-2-ethyl-2-hydroxy-3-oxobutanoate + NADPH + H(+). It participates in amino-acid biosynthesis; L-isoleucine biosynthesis; L-isoleucine from 2-oxobutanoate: step 2/4. It functions in the pathway amino-acid biosynthesis; L-valine biosynthesis; L-valine from pyruvate: step 2/4. In terms of biological role, involved in the biosynthesis of branched-chain amino acids (BCAA). Catalyzes an alkyl-migration followed by a ketol-acid reduction of (S)-2-acetolactate (S2AL) to yield (R)-2,3-dihydroxy-isovalerate. In the isomerase reaction, S2AL is rearranged via a Mg-dependent methyl migration to produce 3-hydroxy-3-methyl-2-ketobutyrate (HMKB). In the reductase reaction, this 2-ketoacid undergoes a metal-dependent reduction by NADPH to yield (R)-2,3-dihydroxy-isovalerate. This Pseudoalteromonas atlantica (strain T6c / ATCC BAA-1087) protein is Ketol-acid reductoisomerase (NADP(+)).